A 305-amino-acid polypeptide reads, in one-letter code: NAD kinase (305 aa).

Asp88 (proton acceptor) is an active-site residue. NAD(+) contacts are provided by residues 88–89 (DG), Arg93, 162–163 (NE), Lys173, Asn192, 203–208 (TAYSFS), and Gln262.

Belongs to the NAD kinase family. Requires a divalent metal cation as cofactor.

The protein resides in the cytoplasm. It catalyses the reaction NAD(+) + ATP = ADP + NADP(+) + H(+). Its function is as follows. Involved in the regulation of the intracellular balance of NAD and NADP, and is a key enzyme in the biosynthesis of NADP. Catalyzes specifically the phosphorylation on 2'-hydroxyl of the adenosine moiety of NAD to yield NADP. The protein is NAD kinase of Tropheryma whipplei (strain TW08/27) (Whipple's bacillus).